Consider the following 402-residue polypeptide: NADH-quinone oxidoreductase subunit D (402 aa).

The protein belongs to the complex I 49 kDa subunit family. In terms of assembly, NDH-1 is composed of 14 different subunits. Subunits NuoB, C, D, E, F, and G constitute the peripheral sector of the complex.

Its subcellular location is the cell inner membrane. It catalyses the reaction a quinone + NADH + 5 H(+)(in) = a quinol + NAD(+) + 4 H(+)(out). In terms of biological role, NDH-1 shuttles electrons from NADH, via FMN and iron-sulfur (Fe-S) centers, to quinones in the respiratory chain. The immediate electron acceptor for the enzyme in this species is believed to be ubiquinone. Couples the redox reaction to proton translocation (for every two electrons transferred, four hydrogen ions are translocated across the cytoplasmic membrane), and thus conserves the redox energy in a proton gradient. This Protochlamydia amoebophila (strain UWE25) protein is NADH-quinone oxidoreductase subunit D.